A 185-amino-acid chain; its full sequence is 3-hydroxyanthranilate 3,4-dioxygenase (185 aa).

Arg-44 provides a ligand contact to O2. Residues His-48, Glu-54, and His-95 each coordinate Fe cation. Glu-54 is a substrate binding site. Positions 99 and 109 each coordinate substrate. Residues Cys-124, Cys-127, Cys-161, and Cys-164 each contribute to the a divalent metal cation site.

Belongs to the 3-HAO family. Fe(2+) serves as cofactor.

The protein resides in the cytoplasm. The catalysed reaction is 3-hydroxyanthranilate + O2 = (2Z,4Z)-2-amino-3-carboxymuconate 6-semialdehyde. It functions in the pathway cofactor biosynthesis; NAD(+) biosynthesis; quinolinate from L-kynurenine: step 3/3. Its function is as follows. Catalyzes the oxidative ring opening of 3-hydroxyanthranilate to 2-amino-3-carboxymuconate semialdehyde, which spontaneously cyclizes to quinolinate. This is 3-hydroxyanthranilate 3,4-dioxygenase from Podospora anserina (strain S / ATCC MYA-4624 / DSM 980 / FGSC 10383) (Pleurage anserina).